The primary structure comprises 119 residues: Flagellar transcriptional regulator FlhD (119 aa).

It belongs to the FlhD family. In terms of assembly, homodimer; disulfide-linked. Forms a heterohexamer composed of two FlhC and four FlhD subunits. Each FlhC binds a FlhD dimer, forming a heterotrimer, and a hexamer assembles by dimerization of two heterotrimers.

The protein resides in the cytoplasm. Functionally, functions in complex with FlhC as a master transcriptional regulator that regulates transcription of several flagellar and non-flagellar operons by binding to their promoter region. Activates expression of class 2 flagellar genes, including fliA, which is a flagellum-specific sigma factor that turns on the class 3 genes. Also regulates genes whose products function in a variety of physiological pathways. This is Flagellar transcriptional regulator FlhD from Escherichia fergusonii (strain ATCC 35469 / DSM 13698 / CCUG 18766 / IAM 14443 / JCM 21226 / LMG 7866 / NBRC 102419 / NCTC 12128 / CDC 0568-73).